Reading from the N-terminus, the 56-residue chain is Protein translocase subunit SecE (56 aa).

The chain crosses the membrane as a helical span at residues 30-50 (VFWLVLFVSIFLGIVDYLMFL).

This sequence belongs to the SecE/SEC61-gamma family. As to quaternary structure, component of the Sec protein translocase complex. Heterotrimer consisting of SecY, SecE and SecG subunits. The heterotrimers can form oligomers, although 1 heterotrimer is thought to be able to translocate proteins. Interacts with the ribosome. Interacts with SecDF, and other proteins may be involved. Interacts with SecA.

The protein resides in the cell inner membrane. Essential subunit of the Sec protein translocation channel SecYEG. Clamps together the 2 halves of SecY. May contact the channel plug during translocation. This chain is Protein translocase subunit SecE, found in Borreliella burgdorferi (strain ATCC 35210 / DSM 4680 / CIP 102532 / B31) (Borrelia burgdorferi).